Consider the following 196-residue polypeptide: Corticoliberin (196 aa).

A signal peptide spans 1-24 (MRLPLLVSAGVLLVALLPCPPCRA). Positions 25–153 (LLSRGPVPGA…HQEAPERERR (129 aa)) are excised as a propeptide. 3 disordered regions span residues 32–61 (PGAR…QPQA), 85–105 (APLS…PSPE), and 136–158 (GARN…EEPP). Composition is skewed to low complexity over residues 38-47 (PQHPQPLDFF) and 85-104 (APLS…RPSP). Basic and acidic residues predominate over residues 146 to 156 (EAPERERRSEE). Isoleucine amide is present on Ile194.

Belongs to the sauvagine/corticotropin-releasing factor/urotensin I family. Interacts (via C-terminus) with CRFR1 (via N-terminal extracellular domain). In terms of tissue distribution, produced by the hypothalamus and placenta.

It localises to the secreted. In terms of biological role, hormone regulating the release of corticotropin from pituitary gland. Induces NLRP6 in intestinal epithelial cells, hence may influence gut microbiota profile. This Homo sapiens (Human) protein is Corticoliberin (CRH).